Here is a 248-residue protein sequence, read N- to C-terminus: 2,3-bisphosphoglycerate-dependent phosphoglycerate mutase (248 aa).

Substrate contacts are provided by residues Arg10–Asn17, Thr23–Gly24, Arg62, Glu89–Tyr92, Lys100, Arg116–Arg117, and Gly183–Asn184. Residue His11 is the Tele-phosphohistidine intermediate of the active site. Glu89 acts as the Proton donor/acceptor in catalysis.

The protein belongs to the phosphoglycerate mutase family. BPG-dependent PGAM subfamily.

It carries out the reaction (2R)-2-phosphoglycerate = (2R)-3-phosphoglycerate. The protein operates within carbohydrate degradation; glycolysis; pyruvate from D-glyceraldehyde 3-phosphate: step 3/5. Functionally, catalyzes the interconversion of 2-phosphoglycerate and 3-phosphoglycerate. This is 2,3-bisphosphoglycerate-dependent phosphoglycerate mutase from Corynebacterium kroppenstedtii (strain DSM 44385 / JCM 11950 / CIP 105744 / CCUG 35717).